The primary structure comprises 63 residues: Cysteine-rich venom protein 3 (63 aa).

Residues 1 to 25 (MRKPITLILVVALALVLLATSEVSA) form the signal peptide. 3 disulfide bridges follow: cysteine 29–cysteine 43, cysteine 36–cysteine 48, and cysteine 42–cysteine 58.

Expressed by the venom gland.

It is found in the secreted. The sequence is that of Cysteine-rich venom protein 3 from Pimpla hypochondriaca (Parasitoid wasp).